Consider the following 2988-residue polypeptide: NBPF family member NBPF14 (2988 aa).

A coiled-coil region spans residues 75 to 119 (RQFKEEKLAEQLKQAEELRQYKVLVHSQERELTQLREKLREGRDA). Disordered stretches follow at residues 161–200 (KLSPENDEDEDEDVQVEEAEKVLESSAPREVQKAEESKVP), 451–474 (EKVQKSSAPREMQKAEEKEVPEDS), and 520–566 (WEDA…EGYS). Residues 165–177 (ENDEDEDEDVQVE) are compositionally biased toward acidic residues. 32 consecutive Olduvai domains span residues 165–259 (ENDE…NILP), 436–528 (ENDN…HIIP), 529–600 (ENES…VDIG), 601–692 (RHRW…PSCP), 695–750 (SREL…LDVD), 751–843 (RIKK…RSKK), 844–919 (ERRR…LDVD), 920–1012 (RIKK…RSKK), 1013–1105 (ERRR…PSCP), 1108–1163 (SREL…LDVD), 1164–1256 (RIKK…RSKK), 1257–1349 (ERRR…PSCP), 1352–1407 (SREL…LDVD), 1408–1500 (RIKK…RSKK), 1501–1593 (ERRR…PSCP), 1596–1651 (SREL…LDVD), 1652–1744 (RFKK…RSKK), 1745–1837 (ERRR…PSCP), 1840–1895 (SREL…LDVD), 1896–1988 (RIKK…RSKK), 1989–2081 (ERRR…PSCP), 2084–2139 (SREL…LDVD), 2140–2232 (RIKK…RSKK), 2233–2325 (ERRR…PSCP), 2328–2383 (SREL…LDVD), 2384–2476 (RIKK…RSKK), 2477–2569 (ERRR…PSCP), 2572–2627 (SREL…LDVD), 2628–2720 (RIKK…RSKK), 2721–2813 (ERRR…PSCP), 2816–2889 (SREL…RSKK), and 2890–2988 (ERRR…IFPQ). Over residues 190 to 200 (EVQKAEESKVP) the composition is skewed to basic and acidic residues. Acidic residues-rich tracts occupy residues 530 to 539 (NESDDEEEEE) and 550 to 562 (ESEEEEVPQESWD). Disordered stretches follow at residues 754–773 (KDEEEEEDQDPPCPRLSREL), 828–871 (EKKG…LDEK), and 999–1038 (KGKGKKRRGRRSKKERRRGRKEGEEDQNPPCPRLSRELLD). Composition is skewed to basic residues over residues 831–849 (GKGKKRRGRRSKKERRRGR) and 1000–1018 (GKGKKRRGRRSKKERRRGR). The segment at 1243–1282 (KGKGKKRRGRRSKKERRRGRKEGEEDQNPPCPRLSRELLD) is disordered. Positions 1244-1262 (GKGKKRRGRRSKKERRRGR) are enriched in basic residues. The interval 1487 to 1521 (KGKGKKRRGRRSKKERRRGRKEGEEDQNPPCPRLS) is disordered. Positions 1488–1506 (GKGKKRRGRRSKKERRRGR) are enriched in basic residues. The interval 1731–1770 (KGKGKKRRGRRSKKERRRGRKEGEEDQNPPCPRLSRELLD) is disordered. Residues 1732-1750 (GKGKKRRGRRSKKERRRGR) show a composition bias toward basic residues. A disordered region spans residues 1975–2014 (KGKGKKRRGRRSKKERRRGRKEGEEDQNPPCPRLSRELLD). Basic residues predominate over residues 1976–1994 (GKGKKRRGRRSKKERRRGR). The interval 2219–2258 (KGKGKKRRGRRSKKERRRGRKEGEEDQNPPCPRLSRELLD) is disordered. Basic residues predominate over residues 2220–2238 (GKGKKRRGRRSKKERRRGR). The disordered stretch occupies residues 2463–2502 (KGKGKKRRGRRSKKERRRGRKEGEEDQNPPCPRLSRELLD). Residues 2464–2482 (GKGKKRRGRRSKKERRRGR) show a composition bias toward basic residues. Disordered stretches follow at residues 2707 to 2745 (KGKGKKRRGRRSKKERRRGRKEGEEDQNPPCPRLSRELL) and 2877 to 2909 (GKGKKRRGRRSKKERRRGRKEGEEDQNPPCPRL). 2 stretches are compositionally biased toward basic residues: residues 2708 to 2726 (GKGKKRRGRRSKKERRRGR) and 2877 to 2895 (GKGKKRRGRRSKKERRRGR).

This sequence belongs to the NBPF family. Expressed in spleen and fetal liver.

The protein resides in the cytoplasm. In Homo sapiens (Human), this protein is NBPF family member NBPF14.